Reading from the N-terminus, the 305-residue chain is Coenzyme PQQ synthesis protein B (305 aa).

Belongs to the PqqB family.

It participates in cofactor biosynthesis; pyrroloquinoline quinone biosynthesis. May be involved in the transport of PQQ or its precursor to the periplasm. This chain is Coenzyme PQQ synthesis protein B, found in Methylobacillus flagellatus.